A 429-amino-acid chain; its full sequence is 3-phosphoshikimate 1-carboxyvinyltransferase (429 aa).

K23, S24, and R28 together coordinate 3-phosphoshikimate. K23 serves as a coordination point for phosphoenolpyruvate. Residues G94 and R126 each coordinate phosphoenolpyruvate. Positions 171, 172, 173, 199, 316, 339, and 343 each coordinate 3-phosphoshikimate. Q173 contacts phosphoenolpyruvate. Catalysis depends on D316, which acts as the Proton acceptor. R347, R389, and K414 together coordinate phosphoenolpyruvate.

Belongs to the EPSP synthase family. In terms of assembly, monomer.

Its subcellular location is the cytoplasm. It catalyses the reaction 3-phosphoshikimate + phosphoenolpyruvate = 5-O-(1-carboxyvinyl)-3-phosphoshikimate + phosphate. The protein operates within metabolic intermediate biosynthesis; chorismate biosynthesis; chorismate from D-erythrose 4-phosphate and phosphoenolpyruvate: step 6/7. In terms of biological role, catalyzes the transfer of the enolpyruvyl moiety of phosphoenolpyruvate (PEP) to the 5-hydroxyl of shikimate-3-phosphate (S3P) to produce enolpyruvyl shikimate-3-phosphate and inorganic phosphate. The polypeptide is 3-phosphoshikimate 1-carboxyvinyltransferase (Idiomarina loihiensis (strain ATCC BAA-735 / DSM 15497 / L2-TR)).